A 270-amino-acid polypeptide reads, in one-letter code: 3-phenylpropionate-dihydrodiol/cinnamic acid-dihydrodiol dehydrogenase (270 aa).

Residue 10–34 coordinates NAD(+); the sequence is FITGGGSGLGLALVERFIEKGAQVA. Residue serine 143 participates in substrate binding. Tyrosine 156 functions as the Proton acceptor in the catalytic mechanism.

This sequence belongs to the short-chain dehydrogenases/reductases (SDR) family.

It carries out the reaction 3-(cis-5,6-dihydroxycyclohexa-1,3-dien-1-yl)propanoate + NAD(+) = 3-(2,3-dihydroxyphenyl)propanoate + NADH + H(+). The catalysed reaction is (2E)-3-(cis-5,6-dihydroxycyclohexa-1,3-dien-1-yl)prop-2-enoate + NAD(+) = (2E)-3-(2,3-dihydroxyphenyl)prop-2-enoate + NADH + H(+). Its pathway is aromatic compound metabolism; 3-phenylpropanoate degradation. In terms of biological role, converts 3-phenylpropionate-dihydrodiol (PP-dihydrodiol) and cinnamic acid-dihydrodiol (CI-dihydrodiol) into 3-(2,3-dihydroxylphenyl)propanoic acid (DHPP) and 2,3-dihydroxicinnamic acid (DHCI), respectively. The protein is 3-phenylpropionate-dihydrodiol/cinnamic acid-dihydrodiol dehydrogenase (hcaB) of Escherichia coli.